Consider the following 422-residue polypeptide: UDP-N-acetylglucosamine 1-carboxyvinyltransferase (422 aa).

A phosphoenolpyruvate-binding site is contributed by lysine 22–asparagine 23. Arginine 94 contacts UDP-N-acetyl-alpha-D-glucosamine. The active-site Proton donor is cysteine 118. Cysteine 118 carries the post-translational modification 2-(S-cysteinyl)pyruvic acid O-phosphothioketal. UDP-N-acetyl-alpha-D-glucosamine-binding positions include arginine 123–leucine 127, aspartate 309, and isoleucine 331.

This sequence belongs to the EPSP synthase family. MurA subfamily.

The protein resides in the cytoplasm. It carries out the reaction phosphoenolpyruvate + UDP-N-acetyl-alpha-D-glucosamine = UDP-N-acetyl-3-O-(1-carboxyvinyl)-alpha-D-glucosamine + phosphate. It participates in cell wall biogenesis; peptidoglycan biosynthesis. Functionally, cell wall formation. Adds enolpyruvyl to UDP-N-acetylglucosamine. In Cereibacter sphaeroides (strain ATCC 17023 / DSM 158 / JCM 6121 / CCUG 31486 / LMG 2827 / NBRC 12203 / NCIMB 8253 / ATH 2.4.1.) (Rhodobacter sphaeroides), this protein is UDP-N-acetylglucosamine 1-carboxyvinyltransferase.